Here is a 615-residue protein sequence, read N- to C-terminus: Nuclear cap-binding protein subunit 3 (615 aa).

Lys12 participates in a covalent cross-link: Glycyl lysine isopeptide (Lys-Gly) (interchain with G-Cter in SUMO2). A compositionally biased stretch (low complexity) spans 15–27; it reads APAGPALGLPSPE. The interval 15-43 is disordered; the sequence is APAGPALGLPSPEVESGLERGEPEPMEVE. Residue Ser25 is modified to Phosphoserine. Residue Lys70 forms a Glycyl lysine isopeptide (Lys-Gly) (interchain with G-Cter in SUMO2) linkage. Ser73 bears the Phosphoserine mark. Positions 126–187 are RNA recognition motif (RRM) domain; that stretch reads ETIYICGVDE…MSSLPAQDKM (62 aa). The short motif at 155-158 is the WLDD motif; essential for 7-methylguanosine-containing mRNA cap binding element; sequence WLDD. Disordered stretches follow at residues 182 to 233 and 332 to 400; these read PAQD…LDTL and HSGL…MDYD. The span at 185–208 shows a compositional bias: basic and acidic residues; it reads DKMRSRDASEDKSSEKNKKDKQED. Lys186 participates in a covalent cross-link: Glycyl lysine isopeptide (Lys-Gly) (interchain with G-Cter in SUMO2). 2 positions are modified to phosphoserine: Ser209 and Ser210. Acidic residues-rich tracts occupy residues 209 to 230 and 341 to 360; these read SSDD…DVEL and EPIE…DMDA. Positions 361 to 383 are enriched in basic and acidic residues; sequence DDRVVVEYHEELPGLKQPRERSL. Thr408 is subject to Phosphothreonine. Phosphoserine is present on Ser410. 2 disordered regions span residues 430 to 454 and 467 to 615; these read SIRN…NKLP and EKRQ…EAES. Over residues 506–516 the composition is skewed to basic and acidic residues; it reads VRREPSSDVHS. Lys536 is covalently cross-linked (Glycyl lysine isopeptide (Lys-Gly) (interchain with G-Cter in SUMO2)). Basic and acidic residues-rich tracts occupy residues 549 to 564 and 580 to 593; these read KTKE…RASG and IKEK…KSRL. Phosphoserine is present on Ser563. Residues 606–615 show a composition bias toward low complexity; that stretch reads ESSSGSEAES. Residue Ser615 is modified to Phosphoserine.

The protein belongs to the NCBP3 family. Component of an alternative cap-binding complex (CBC) composed of NCBP1/CBP80 and NCBP3. Interacts with SRRT, KPNA3, THOC5 and EIF4A3.

It is found in the nucleus. The protein resides in the cytoplasm. In terms of biological role, associates with NCBP1/CBP80 to form an alternative cap-binding complex (CBC) which plays a key role in mRNA export. NCBP3 serves as adapter protein linking the capped RNAs (m7GpppG-capped RNA) to NCBP1/CBP80. Unlike the conventional CBC with NCBP2 which binds both small nuclear RNA (snRNA) and messenger (mRNA) and is involved in their export from the nucleus, the alternative CBC with NCBP3 does not bind snRNA and associates only with mRNA thereby playing a role in only mRNA export. The alternative CBC is particularly important in cellular stress situations such as virus infections and the NCBP3 activity is critical to inhibit virus growth. In Mus musculus (Mouse), this protein is Nuclear cap-binding protein subunit 3.